Consider the following 842-residue polypeptide: Putative G-type lectin S-receptor-like serine/threonine-protein kinase At1g61610 (842 aa).

The first 22 residues, 1–22 (MAGFNRNLTLVTTLLIFHQLCS), serve as a signal peptide directing secretion. N-linked (GlcNAc...) asparagine glycosylation is found at asparagine 7, asparagine 23, asparagine 35, asparagine 60, asparagine 110, asparagine 123, asparagine 304, asparagine 351, and asparagine 380. Topologically, residues 23–443 (NVSCSTSNSF…KLGGGKENST (421 aa)) are extracellular. Residues 29 to 150 (SNSFTRNHTI…SDRRKWYWES (122 aa)) enclose the Bulb-type lectin domain. The region spanning 292 to 331 (PSTECEKYNRCGNYSVCDDSKEFDSGKCSCIDGFEPVHQD) is the EGF-like domain. 2 cysteine pairs are disulfide-bonded: cysteine 296–cysteine 308 and cysteine 302–cysteine 319. A PAN domain is found at 350–431 (CNQSLVAGQE…GGNSINIRLA (82 aa)). Disulfide bonds link cysteine 385–cysteine 406 and cysteine 389–cysteine 395. Asparagine 441 is a glycosylation site (N-linked (GlcNAc...) asparagine). Residues 444–464 (LWIIVFSVIGAFLLGLCIWIL) form a helical membrane-spanning segment. At 465–842 (WKFKKSLKAF…DVTFTTIVGR (378 aa)) the chain is on the cytoplasmic side. The Protein kinase domain occupies 525–814 (FAEENKLGQG…PRQPTFHSFL (290 aa)). Residues 531–539 (LGQGGFGTV) and lysine 553 each bind ATP. Position 559 is a phosphoserine (serine 559). The tract at residues 614 to 631 (SKQGSLDWRKRWEVIGGI) is caM-binding. Catalysis depends on aspartate 650, which acts as the Proton acceptor. A phosphoserine mark is found at serine 654 and serine 667. Threonine 684 carries the phosphothreonine modification. Serine 728 and serine 830 each carry phosphoserine. Phosphothreonine is present on threonine 837.

The protein belongs to the protein kinase superfamily. Ser/Thr protein kinase family.

The protein resides in the cell membrane. The catalysed reaction is L-seryl-[protein] + ATP = O-phospho-L-seryl-[protein] + ADP + H(+). The enzyme catalyses L-threonyl-[protein] + ATP = O-phospho-L-threonyl-[protein] + ADP + H(+). The protein is Putative G-type lectin S-receptor-like serine/threonine-protein kinase At1g61610 of Arabidopsis thaliana (Mouse-ear cress).